We begin with the raw amino-acid sequence, 353 residues long: Photosystem II protein D1 (353 aa).

Threonine 2 carries the post-translational modification N-acetylthreonine. The residue at position 2 (threonine 2) is a Phosphothreonine. 3 helical membrane-spanning segments follow: residues 29 to 46 (YIGW…TATS), 118 to 133 (HFLL…EWEL), and 142 to 156 (WIAV…AATA). Histidine 118 contributes to the chlorophyll a binding site. Tyrosine 126 contacts pheophytin a. [CaMn4O5] cluster is bound by residues aspartate 170 and glutamate 189. The chain crosses the membrane as a helical span at residues 197–218 (FHMLGVAGVFGGSLFSAMHGSL). Histidine 198 lines the chlorophyll a pocket. A quinone-binding positions include histidine 215 and 264-265 (SF). Histidine 215 serves as a coordination point for Fe cation. Fe cation is bound at residue histidine 272. The helical transmembrane segment at 274–288 (FLAAWPVVGIWFTAL) threads the bilayer. Histidine 332, glutamate 333, aspartate 342, and alanine 344 together coordinate [CaMn4O5] cluster. Positions 345 to 353 (AVEAPSING) are excised as a propeptide.

Belongs to the reaction center PufL/M/PsbA/D family. As to quaternary structure, PSII is composed of 1 copy each of membrane proteins PsbA, PsbB, PsbC, PsbD, PsbE, PsbF, PsbH, PsbI, PsbJ, PsbK, PsbL, PsbM, PsbT, PsbX, PsbY, PsbZ, Psb30/Ycf12, at least 3 peripheral proteins of the oxygen-evolving complex and a large number of cofactors. It forms dimeric complexes. The D1/D2 heterodimer binds P680, chlorophylls that are the primary electron donor of PSII, and subsequent electron acceptors. It shares a non-heme iron and each subunit binds pheophytin, quinone, additional chlorophylls, carotenoids and lipids. D1 provides most of the ligands for the Mn4-Ca-O5 cluster of the oxygen-evolving complex (OEC). There is also a Cl(-1) ion associated with D1 and D2, which is required for oxygen evolution. The PSII complex binds additional chlorophylls, carotenoids and specific lipids. serves as cofactor. Tyr-161 forms a radical intermediate that is referred to as redox-active TyrZ, YZ or Y-Z. Post-translationally, C-terminally processed by CTPA; processing is essential to allow assembly of the oxygen-evolving complex and thus photosynthetic growth.

The protein resides in the plastid. It localises to the chloroplast thylakoid membrane. The catalysed reaction is 2 a plastoquinone + 4 hnu + 2 H2O = 2 a plastoquinol + O2. Its function is as follows. Photosystem II (PSII) is a light-driven water:plastoquinone oxidoreductase that uses light energy to abstract electrons from H(2)O, generating O(2) and a proton gradient subsequently used for ATP formation. It consists of a core antenna complex that captures photons, and an electron transfer chain that converts photonic excitation into a charge separation. The D1/D2 (PsbA/PsbD) reaction center heterodimer binds P680, the primary electron donor of PSII as well as several subsequent electron acceptors. The polypeptide is Photosystem II protein D1 (Medicago sativa (Alfalfa)).